Here is an 889-residue protein sequence, read N- to C-terminus: Extended synaptotagmin-3 (889 aa).

Residues methionine 1 to alanine 65 form a disordered region. The Cytoplasmic portion of the chain corresponds to methionine 1–glycine 66. Basic and acidic residues-rich tracts occupy residues threonine 17–glutamate 28 and proline 41–arginine 58. Transmembrane regions (helical) follow at residues glutamate 67–tyrosine 91 and leucine 92–phenylalanine 112. Residues tryptophan 113–serine 889 lie on the Cytoplasmic side of the membrane. An SMP-LTD domain is found at aspartate 155 to serine 333. C2 domains follow at residues proline 331–phenylalanine 452 and tryptophan 468–lysine 618. Residues lysine 363, aspartate 364, aspartate 376, aspartate 423, glutamate 424, aspartate 425, aspartate 427, aspartate 429, and aspartate 430 each contribute to the Ca(2+) site. Residues serine 649–serine 724 form a disordered region. The segment covering histidine 658 to alanine 671 has biased composition (basic residues). 2 stretches are compositionally biased toward low complexity: residues histidine 672–glutamine 682 and isoleucine 691–threonine 714. One can recognise a C2 3 domain in the interval methionine 757 to phenylalanine 879. Positions arginine 804–lysine 811 are required for phosphatidylinositol 4,5-bisphosphate-dependent location at the cell membrane.

The protein belongs to the extended synaptotagmin family.

Its subcellular location is the cell membrane. The protein resides in the endoplasmic reticulum membrane. Tethers the endoplasmic reticulum to the cell membrane and promotes the formation of appositions between the endoplasmic reticulum and the cell membrane. Binds glycerophospholipids in a barrel-like domain and may play a role in cellular lipid transport. In Xenopus tropicalis (Western clawed frog), this protein is Extended synaptotagmin-3 (esyt3).